Consider the following 274-residue polypeptide: Receptor-like protein 44 (274 aa).

The first 24 residues, 1-24 (MTRSHRLLLLLLLIFQTAQRLTTA), serve as a signal peptide directing secretion. The Extracellular segment spans residues 25–223 (DPNDEACLKN…PLQEMMMKSK (199 aa)). Residues N48, N82, and N95 are each glycosylated (N-linked (GlcNAc...) asparagine). LRR repeat units lie at residues 96 to 121 (CTNL…QYLV), 123 to 144 (LAVL…LALC), 145 to 168 (AYLN…LGLL), and 169 to 192 (ARLS…LSNR). N-linked (GlcNAc...) asparagine glycosylation is present at N127. N-linked (GlcNAc...) asparagine glycosylation is found at N191 and N200. The helical transmembrane segment at 224–244 (GLSVMAIVGIGLGSGIASLMI) threads the bilayer. At 245-274 (SFTGVCLWLRITEKKIVEEEGKISQSMPDY) the chain is on the cytoplasmic side.

Belongs to the RLP family.

The protein resides in the cell membrane. This Arabidopsis thaliana (Mouse-ear cress) protein is Receptor-like protein 44.